The chain runs to 369 residues: MSSTLYTSPRLDGFRMPAEHEPQEQVWMAWPTREDNWREKGKHAQAEFVAVATAIAQSTKVTFIVDAKHYEQARLALPDQIRVIEIPSDDCWMRDIGATYVVNDQGERRANSWQFNAWGGELDGLYDSWEQDNAVAEKMAAVTGDYVYHAPLILEGGSIHVDGEGTLYTTEECLLHPSRNPHLSKEDIEDLLKVYLNVEKIIWLKDGLYNDETNGHVDNIMHVIRPGVVALTDCEDSNDPQYAISKAAIKVLSQAIDAKGRTLEIIKLPMPGPLFVSEDEAKNLLKSDSMNRQVGERLAASYANFLITNNSIVFPTFGEKTDEQAKEILQKAFPEHKVIGVYARNILLGGGNIHCITQQVPEKCSIKVV.

C355 acts as the Amidino-cysteine intermediate in catalysis.

Belongs to the agmatine deiminase family.

It carries out the reaction agmatine + H2O = N-carbamoylputrescine + NH4(+). The protein is Putative agmatine deiminase of Marinomonas sp. (strain MWYL1).